A 372-amino-acid polypeptide reads, in one-letter code: Chaperone protein DnaJ (372 aa).

The J domain maps to 5–70 (DYYEVLGVAK…DKRAAYDQFG (66 aa)). Residues 133–211 (GTETKIRIPT…CHGEGRVKKH (79 aa)) form a CR-type zinc finger. Cys146, Cys149, Cys163, Cys166, Cys185, Cys188, Cys199, and Cys202 together coordinate Zn(2+). CXXCXGXG motif repeat units follow at residues 146–153 (CGTCHGSG), 163–170 (CSACGGHG), 185–192 (CPRCGGTG), and 199–206 (CPSCHGEG).

This sequence belongs to the DnaJ family. In terms of assembly, homodimer. Zn(2+) is required as a cofactor.

It is found in the cytoplasm. In terms of biological role, participates actively in the response to hyperosmotic and heat shock by preventing the aggregation of stress-denatured proteins and by disaggregating proteins, also in an autonomous, DnaK-independent fashion. Unfolded proteins bind initially to DnaJ; upon interaction with the DnaJ-bound protein, DnaK hydrolyzes its bound ATP, resulting in the formation of a stable complex. GrpE releases ADP from DnaK; ATP binding to DnaK triggers the release of the substrate protein, thus completing the reaction cycle. Several rounds of ATP-dependent interactions between DnaJ, DnaK and GrpE are required for fully efficient folding. Also involved, together with DnaK and GrpE, in the DNA replication of plasmids through activation of initiation proteins. The sequence is that of Chaperone protein DnaJ from Thiobacillus denitrificans (strain ATCC 25259 / T1).